We begin with the raw amino-acid sequence, 515 residues long: Maturase K (515 aa).

It belongs to the intron maturase 2 family. MatK subfamily.

The protein localises to the plastid. It localises to the chloroplast. Functionally, usually encoded in the trnK tRNA gene intron. Probably assists in splicing its own and other chloroplast group II introns. This Larix laricina (Tamarack) protein is Maturase K.